Reading from the N-terminus, the 341-residue chain is NADH-quinone oxidoreductase subunit 8 (341 aa).

8 helical membrane passes run 9–29, 75–95, 108–128, 154–174, 180–200, 244–264, 278–298, and 321–341; these read ALIA…LVYA, FIHA…PALI, VGVL…TLAG, MGTA…SAIV, GWAI…IFIV, LFVA…VPFE, VLLG…FAFL, and YLLP…ALFS.

It belongs to the complex I subunit 1 family. NDH-1 is composed of 14 different subunits. Subunits Nqo7-14 constitute the membrane sector of the complex.

The protein resides in the cell inner membrane. It carries out the reaction a quinone + NADH + 5 H(+)(in) = a quinol + NAD(+) + 4 H(+)(out). Functionally, NDH-1 shuttles electrons from NADH, via FMN and iron-sulfur (Fe-S) centers, to quinones in the respiratory chain. The immediate electron acceptor for the enzyme in this species is believed to be menaquinone. Couples the redox reaction to proton translocation (for every two electrons transferred, four hydrogen ions are translocated across the cytoplasmic membrane), and thus conserves the redox energy in a proton gradient. In Rhodothermus marinus (Rhodothermus obamensis), this protein is NADH-quinone oxidoreductase subunit 8 (nqo8).